The sequence spans 946 residues: Bifunctional glutamine synthetase adenylyltransferase/adenylyl-removing enzyme (946 aa).

The interval 1–440 (MKPLSSPLQQ…VFNELIGDDE (440 aa)) is adenylyl removase. The adenylyl transferase stretch occupies residues 449–946 (SEQWRELWQD…ASWQKWLVEE (498 aa)).

It belongs to the GlnE family. It depends on Mg(2+) as a cofactor.

It carries out the reaction [glutamine synthetase]-O(4)-(5'-adenylyl)-L-tyrosine + phosphate = [glutamine synthetase]-L-tyrosine + ADP. It catalyses the reaction [glutamine synthetase]-L-tyrosine + ATP = [glutamine synthetase]-O(4)-(5'-adenylyl)-L-tyrosine + diphosphate. In terms of biological role, involved in the regulation of glutamine synthetase GlnA, a key enzyme in the process to assimilate ammonia. When cellular nitrogen levels are high, the C-terminal adenylyl transferase (AT) inactivates GlnA by covalent transfer of an adenylyl group from ATP to specific tyrosine residue of GlnA, thus reducing its activity. Conversely, when nitrogen levels are low, the N-terminal adenylyl removase (AR) activates GlnA by removing the adenylyl group by phosphorolysis, increasing its activity. The regulatory region of GlnE binds the signal transduction protein PII (GlnB) which indicates the nitrogen status of the cell. The protein is Bifunctional glutamine synthetase adenylyltransferase/adenylyl-removing enzyme of Escherichia coli (strain K12 / MC4100 / BW2952).